The following is a 449-amino-acid chain: Histone PARylation factor 1-like (449 aa).

A CCHC-type zinc finger spans residues 3-28 (KEDCKYWDKCYQQNPAHLSKYNHPKK). The segment at 18-93 (AHLSKYNHPK…AKGSYEAETE (76 aa)) is disordered. Basic and acidic residues-rich tracts occupy residues 28–41 (KQQE…EGKK) and 54–69 (EQKK…KDKS). Ser-72 is modified (phosphoserine). Residue Glu-384 is the Proton donor of the active site.

It belongs to the HPF1 family.

The protein localises to the chromosome. It is found in the nucleus. Functionally, cofactor for serine ADP-ribosylation that confers serine specificity on Parp. Switches the amino acid specificity of Parp from aspartate or glutamate to serine residues. Acts by completing the active site of Parp: forms a composite active site composed of residues from HPF1/CG1218 and Parp. This Drosophila melanogaster (Fruit fly) protein is Histone PARylation factor 1-like.